The chain runs to 373 residues: Dual-specificity RNA methyltransferase RlmN (373 aa).

The active-site Proton acceptor is the Glu-94. The region spanning 100 to 339 is the Radical SAM core domain; it reads EDDRATLCVS…VIVRKTRGDD (240 aa). Cys-107 and Cys-344 are disulfide-bonded. Positions 114, 118, and 121 each coordinate [4Fe-4S] cluster. S-adenosyl-L-methionine-binding positions include 168–169, Ser-200, 222–224, and Asn-301; these read GE and SIH. Residue Cys-344 is the S-methylcysteine intermediate of the active site.

Belongs to the radical SAM superfamily. RlmN family. It depends on [4Fe-4S] cluster as a cofactor.

It localises to the cytoplasm. The enzyme catalyses adenosine(2503) in 23S rRNA + 2 reduced [2Fe-2S]-[ferredoxin] + 2 S-adenosyl-L-methionine = 2-methyladenosine(2503) in 23S rRNA + 5'-deoxyadenosine + L-methionine + 2 oxidized [2Fe-2S]-[ferredoxin] + S-adenosyl-L-homocysteine. The catalysed reaction is adenosine(37) in tRNA + 2 reduced [2Fe-2S]-[ferredoxin] + 2 S-adenosyl-L-methionine = 2-methyladenosine(37) in tRNA + 5'-deoxyadenosine + L-methionine + 2 oxidized [2Fe-2S]-[ferredoxin] + S-adenosyl-L-homocysteine. Specifically methylates position 2 of adenine 2503 in 23S rRNA and position 2 of adenine 37 in tRNAs. m2A2503 modification seems to play a crucial role in the proofreading step occurring at the peptidyl transferase center and thus would serve to optimize ribosomal fidelity. This Shewanella putrefaciens (strain CN-32 / ATCC BAA-453) protein is Dual-specificity RNA methyltransferase RlmN.